Consider the following 82-residue polypeptide: MNRLMILVFAAVFLALASADEDVDIAKRGIPCLCVSDGPSTRGNNLSGIMWMKTGGYGGNGCPKGWHFCGKSRGFFSDCCKR.

The N-terminal stretch at 1–19 is a signal peptide; that stretch reads MNRLMILVFAAVFLALASA. A propeptide spanning residues 20 to 26 is cleaved from the precursor; sequence DEDVDIA. 3 disulfide bridges follow: Cys-32–Cys-79, Cys-34–Cys-69, and Cys-62–Cys-80.

It belongs to the sea anemone sodium channel inhibitory toxin family. Type I subfamily.

The protein localises to the secreted. It localises to the nematocyst. In terms of biological role, binds specifically to voltage-gated sodium channels (Nav), thereby delaying their inactivation during signal transduction. Causes death to crabs. The polypeptide is Delta-actitoxin-Aeq2c (Actinia equina (Beadlet anemone)).